The following is a 177-amino-acid chain: Nuclear export protein (177 aa).

2 consecutive short sequence motifs (nuclear export signal) follow at residues 91–100 and 117–127; these read LWLPMKSLSL and MKHQILTRLKL.

Binds M1 protein. May interact with human nucleoporins and exportin XPO1/CRM1.

It localises to the virion. The protein localises to the host nucleus. Functionally, mediates the nuclear export of encapsidated genomic RNAs (ribonucleoproteins, RNPs). Acts as an adapter between viral RNPs complexes and the nuclear export machinery of the cell. Possesses no intrinsic RNA-binding activity, but includes a C-terminal M1-binding domain. This domain is believed to allow recognition of RNPs to which the M1 protein is bound. Because the M1 protein is not available in large quantities until the later stages of infection, such an indirect recognition mechanism probably ensures that genomic RNPs are not exported from the nucleus before sufficient quantities of viral mRNA and progeny genomic RNA have been synthesized. Furthermore, the RNPs enters the cytoplasm only when they have associated with the M1 protein that is necessary to guide them to the plasma membrane. May down-regulate viral RNA synthesis when overproduced. The protein is Nuclear export protein (NS) of Homo sapiens (Human).